The sequence spans 65 residues: Large ribosomal subunit protein bL35 (65 aa).

This sequence belongs to the bacterial ribosomal protein bL35 family.

This chain is Large ribosomal subunit protein bL35, found in Prochlorococcus marinus (strain MIT 9313).